Consider the following 767-residue polypeptide: ATPase family gene 2 protein homolog B (767 aa).

Met1 bears the N-acetylmethionine mark. ATP contacts are provided by residues 241–248 (GPPGVGKT) and 507–514 (GPPGCAKT).

It belongs to the AAA ATPase family. AFG2 subfamily. As to quaternary structure, part of the 55LCC heterohexameric ATPase complex composed at least of AIRIM, AFG2A, AFG2B and CINP. Associates with pre-60S ribosomal particles.

The protein resides in the cytoplasm. It localises to the cytoskeleton. It is found in the spindle. Its subcellular location is the nucleus. It catalyses the reaction ATP + H2O = ADP + phosphate + H(+). Its activity is regulated as follows. In the context of 55LCC heterohexameric ATPase complex, the ATPase activity is stimulated by DNA binding and inhibited in presence of RNA. Functionally, ATP-dependent chaperone part of the 55LCC heterohexameric ATPase complex which is chromatin-associated and promotes replisome proteostasis to maintain replication fork progression and genome stability. Required for replication fork progression, sister chromatid cohesion, and chromosome stability. The ATPase activity is specifically enhanced by replication fork DNA and is coupled to cysteine protease-dependent cleavage of replisome substrates in response to replication fork damage. Uses ATPase activity to process replisome substrates in S-phase, facilitating their proteolytic turnover from chromatin to ensure DNA replication and mitotic fidelity. Plays an essential role in the cytoplasmic maturation steps of pre-60S ribosomal particles by promoting the release of shuttling protein RSL24D1/RLP24 from the pre-ribosomal particles. The polypeptide is ATPase family gene 2 protein homolog B (AFG2B) (Bos taurus (Bovine)).